The primary structure comprises 306 residues: Aspartate carbamoyltransferase catalytic subunit (306 aa).

Carbamoyl phosphate is bound by residues Arg55 and Thr56. L-aspartate is bound at residue Lys84. Carbamoyl phosphate contacts are provided by Arg105, His133, and Gln136. The L-aspartate site is built by Arg166 and Arg227. Positions 265 and 266 each coordinate carbamoyl phosphate.

Belongs to the aspartate/ornithine carbamoyltransferase superfamily. ATCase family. In terms of assembly, heterododecamer (2C3:3R2) of six catalytic PyrB chains organized as two trimers (C3), and six regulatory PyrI chains organized as three dimers (R2).

It carries out the reaction carbamoyl phosphate + L-aspartate = N-carbamoyl-L-aspartate + phosphate + H(+). It functions in the pathway pyrimidine metabolism; UMP biosynthesis via de novo pathway; (S)-dihydroorotate from bicarbonate: step 2/3. In terms of biological role, catalyzes the condensation of carbamoyl phosphate and aspartate to form carbamoyl aspartate and inorganic phosphate, the committed step in the de novo pyrimidine nucleotide biosynthesis pathway. The polypeptide is Aspartate carbamoyltransferase catalytic subunit (Neisseria meningitidis serogroup C / serotype 2a (strain ATCC 700532 / DSM 15464 / FAM18)).